Consider the following 340-residue polypeptide: Probable complex I intermediate-associated protein 30, mitochondrial (340 aa).

Belongs to the CIA30 family.

The protein resides in the mitochondrion. Functionally, chaperone protein involved in the assembly of the mitochondrial NADH:ubiquinone oxidoreductase complex (complex I). Required for normal growth and reproduction. This is Probable complex I intermediate-associated protein 30, mitochondrial (nuaf-1) from Caenorhabditis briggsae.